The sequence spans 272 residues: Endoplasmic reticulum resident protein 27 (272 aa).

The N-terminal stretch at 1-25 (MKITRSRCLILSFVLVCGLVPEVTA) is a signal peptide. A Thioredoxin domain is found at 39–152 (EPIWLTDVPA…WVTEYSPMIA (114 aa)). Residues Asn91 and Asn100 are each glycosylated (N-linked (GlcNAc...) asparagine). Residues 230–233 (DKWD) form a PDIA3-binding site region. The Prevents secretion from ER motif lies at 269-272 (KEEL).

This sequence belongs to the protein disulfide isomerase family. As to quaternary structure, interacts with PDIA3.

It localises to the endoplasmic reticulum lumen. In terms of biological role, specifically binds unfolded proteins and may recruit protein disulfide isomerase PDIA3 to unfolded substrates. Binds protein substrates via a hydrophobic pocket in the C-terminal domain. May play a role in the unfolded stress response. This is Endoplasmic reticulum resident protein 27 (Erp27) from Mus musculus (Mouse).